Here is a 249-residue protein sequence, read N- to C-terminus: Eukaryotic translation initiation factor 3 subunit K (249 aa).

The region spanning 46-222 (FDCYANLALL…VKVPTNKENE (177 aa)) is the PCI domain.

This sequence belongs to the eIF-3 subunit K family. In terms of assembly, component of the eukaryotic translation initiation factor 3 (eIF-3) complex.

The protein localises to the cytoplasm. Functionally, component of the eukaryotic translation initiation factor 3 (eIF-3) complex, which is involved in protein synthesis of a specialized repertoire of mRNAs and, together with other initiation factors, stimulates binding of mRNA and methionyl-tRNAi to the 40S ribosome. The eIF-3 complex specifically targets and initiates translation of a subset of mRNAs involved in cell proliferation. The chain is Eukaryotic translation initiation factor 3 subunit K from Neosartorya fischeri (strain ATCC 1020 / DSM 3700 / CBS 544.65 / FGSC A1164 / JCM 1740 / NRRL 181 / WB 181) (Aspergillus fischerianus).